Consider the following 608-residue polypeptide: MRVLYIHAERFNWEPRDPALDIRDEPTSGNANNALVVFTSVERGDVPDENFLRAVASDIIDVAKKVKASAIVIYPYAHLSSDLARPYTAREVLNKLFEVVKSQFNGEVLKAPFGYYKAFEIKCLGHPLSELSRSFKPEEGRADRRAEERRDYYVIITPNGEEHDPAKFNYANYGDLKALVEKEVFRKELGGGEPKYLEYLRKFGFEWEPMSDAGHMRYAPEATVMMELVEDYSYIVAKSLGIPVFKIRGTNMFKLSEKAIESHARLFGERLYIVESDTDLILRYAACFQQFAMAKDWVISYKHLPFGMLEIADSYRHEQPGETVLLFRLRRFYMPDLHIFTKDLKEAMEVTYKLHEVIFREIGKLGRTYVSLYNVTEGFYKNHRDYLVELARREGKPILVRVLPGQKYYWVLNVEFHIVDELGRPREIATFQIDVGNAQRFGIKYVDENNQIKYPVIIHTAILGSVERYLYAVFDTMAKMEKEGKVPRLPTWLSPVQVRVIPVSKENLKYAISIADVLEAEGIRVDIDDREETLSKKIRDAETSWIPYIVVVGSKEEAEGVIAVRERGGGQYKIRLEELVKKLKDETRGYPQRPLYLPRLLSQRPSRF.

The editing domain stretch occupies residues Met-1 to Asp-143. Catalytic regions lie at residues Pro-194 to Pro-490 and Lys-195 to Pro-490. Residues Cys-287, His-338, and His-459 each contribute to the Zn(2+) site.

It belongs to the class-II aminoacyl-tRNA synthetase family. As to quaternary structure, homodimer. Zn(2+) serves as cofactor.

It localises to the cytoplasm. It carries out the reaction tRNA(Thr) + L-threonine + ATP = L-threonyl-tRNA(Thr) + AMP + diphosphate + H(+). Functionally, catalyzes the attachment of threonine to tRNA(Thr) in a two-step reaction: L-threonine is first activated by ATP to form Thr-AMP and then transferred to the acceptor end of tRNA(Thr). Also edits incorrectly charged L-seryl-tRNA(Thr). This chain is Threonine--tRNA ligase, found in Pyrobaculum aerophilum (strain ATCC 51768 / DSM 7523 / JCM 9630 / CIP 104966 / NBRC 100827 / IM2).